Here is a 499-residue protein sequence, read N- to C-terminus: Serine/threonine protein phosphatase 2A 57 kDa regulatory subunit B' beta isoform (499 aa).

The span at 1–13 (MFKKIMKGGHRKP) shows a compositional bias: basic residues. A disordered region spans residues 1-65 (MFKKIMKGGH…PVTATPPPPP (65 aa)).

Belongs to the phosphatase 2A regulatory subunit B56 family. In terms of assembly, PP2A consists of a common heteromeric enzyme, composed of a catalytic subunit (subunits C), a constant regulatory subunit (subunit A), and a variety of regulatory subunits such as subunits B (the R2/B/PR55/B55, R3/B''/PR72/PR130/PR59 and R5/B'/B56 families). Interacts with BZR1. Interacts with BRI1. Interacts with SRK2E/OST1. As to expression, expressed ubiquitously, higher levels in cotyledons and flowers.

It is found in the nucleus. Its subcellular location is the cytoplasm. In terms of biological role, the B regulatory subunit may modulate substrate selectivity and catalytic activity, and may also direct the localization of the catalytic enzyme to a particular subcellular compartment. Required for the formation of the PP2A holoenzyme that positively regulates brassinosteroid signaling by dephosphorylating and activating BZR1. This chain is Serine/threonine protein phosphatase 2A 57 kDa regulatory subunit B' beta isoform (B'BETA), found in Arabidopsis thaliana (Mouse-ear cress).